Consider the following 623-residue polypeptide: Peptide transporter PTR2 (623 aa).

Disordered stretches follow at residues 1 to 20 (MVSS…VLTD) and 31 to 58 (DYED…TPQE). 11 consecutive transmembrane segments (helical) span residues 134–154 (ALTN…GYLG), 163–183 (AIQW…FASI), 191–211 (NAGL…SGLM), 250–270 (ITNV…ATSY), 277–297 (FWLA…FLFI), 385–405 (IIFN…IGAM), 418–438 (FNPL…YPLL), 448–468 (IWRI…GFVL), 499–519 (LFIL…ELAY), 529–549 (LVYA…LAIT), and 557–577 (LHWV…VMLA).

Belongs to the major facilitator superfamily. Proton-dependent oligopeptide transporter (POT/PTR) (TC 2.A.17) family.

Its subcellular location is the membrane. In terms of biological role, uptake of small peptides. This chain is Peptide transporter PTR2 (PTR2), found in Candida albicans (Yeast).